The chain runs to 498 residues: DEAD-box ATP-dependent RNA helicase 12 (498 aa).

Residues 1–114 (MNTNRGRYPP…RLPPPDTRYQ (114 aa)) are disordered. Low complexity predominate over residues 27 to 65 (SYRQQQPPQDQQYVQRGYSQNPQQMQLQQQHQQQQQQQQ). The segment covering 74–96 (GNASNANEVVQQTTQPEASSDAN) has biased composition (polar residues). Residues 124–152 (NEFEDYFLKRDLLKGIYEKGFEKPSPIQE) carry the Q motif motif. In terms of domain architecture, Helicase ATP-binding spans 155–325 (IPIALTGSDI…DRHLRKPYVI (171 aa)). 168–175 (AKNGTGKT) contacts ATP. The residue at position 230 (T230) is a Phosphothreonine. Residues 273-276 (DEAD) carry the DEAD box motif. The region spanning 335 to 495 (GVTQYYAFVE…PIPSNIDQAI (161 aa)) is the Helicase C-terminal domain.

This sequence belongs to the DEAD box helicase family. DDX6/DHH1 subfamily.

It localises to the cytoplasm. The protein localises to the P-body. The catalysed reaction is ATP + H2O = ADP + phosphate + H(+). In terms of biological role, ATP-dependent RNA helicase involved in mRNA turnover, and more specifically in mRNA decapping. The sequence is that of DEAD-box ATP-dependent RNA helicase 12 (RH12) from Arabidopsis thaliana (Mouse-ear cress).